The primary structure comprises 543 residues: Malate synthase (543 aa).

This sequence belongs to the malate synthase family. Homodimer.

It is found in the cytoplasm. It carries out the reaction glyoxylate + acetyl-CoA + H2O = (S)-malate + CoA + H(+). The protein operates within carbohydrate metabolism; glyoxylate cycle; (S)-malate from isocitrate: step 2/2. The chain is Malate synthase (aceB) from Streptomyces arenae.